Consider the following 429-residue polypeptide: Glycogenin-1 (429 aa).

UDP-binding residues include Leu8, Thr10, Asn11, Tyr14, and Arg76. The UDP-alpha-D-glucose site is built by Leu8, Thr10, Asn11, Tyr14, Arg76, Lys85, Asp101, Ala102, Asp103, Asn132, Ser133, Asp159, Asp162, and Gln163. UDP is bound by residues Asp101, Ala102, and Asp103. Residue Asp101 participates in Mn(2+) binding. Asp103 lines the Mn(2+) pocket. Tyr194 carries an O-linked (Glc...) tyrosine glycan. The UDP site is built by His211, Gly214, and Lys217. Residue His211 coordinates Mn(2+). The UDP-alpha-D-glucose site is built by Gly214 and Lys217. Disordered stretches follow at residues 254-274 (VFPS…HPKI) and 300-338 (SYDT…QTPH). Basic and acidic residues-rich tracts occupy residues 263-274 (EHRSHSADHPKI) and 309-338 (DSHR…QTPH).

It belongs to the glycosyltransferase 8 family. Glycogenin subfamily. Forms a heterooctamer with one molecule of gyg-1 bound to each protomer of the gys-1 homotetramer. The N-terminus of gys-1 is involved in interprotomer contacts with gyg-1. The interaction with gys-1 is required for glycogen production but is not required for gys-1 intrinsic activity. Requires Mn(2+) as cofactor. Self-glycosylated by the transfer of glucose residues from UDP-glucose to itself, forming an alpha-1,4-glycan of around 10 residues attached to Tyr-194.

It localises to the cytoplasm. Its subcellular location is the nucleus. It catalyses the reaction L-tyrosyl-[glycogenin] + UDP-alpha-D-glucose = alpha-D-glucosyl-L-tyrosyl-[glycogenin] + UDP + H(+). The catalysed reaction is [1,4-alpha-D-glucosyl](n)-L-tyrosyl-[glycogenin] + UDP-alpha-D-glucose = [1,4-alpha-D-glucosyl](n+1)-L-tyrosyl-[glycogenin] + UDP + H(+). It participates in glycan biosynthesis; glycogen biosynthesis. In terms of biological role, self-glucosylating initiator of glycogen synthesis. It catalyzes the formation of a short alpha (1,4)-glucosyl chain covalently attached via a glucose 1-O-tyrosyl linkage to internal tyrosine residues and these chains act as primers for the elongation reaction catalyzed by glycogen synthase. The protein is Glycogenin-1 of Caenorhabditis elegans.